The sequence spans 144 residues: Transcription antitermination protein NusB (144 aa).

Belongs to the NusB family.

Involved in transcription antitermination. Required for transcription of ribosomal RNA (rRNA) genes. Binds specifically to the boxA antiterminator sequence of the ribosomal RNA (rrn) operons. The chain is Transcription antitermination protein NusB from Dictyoglomus turgidum (strain DSM 6724 / Z-1310).